A 40-amino-acid polypeptide reads, in one-letter code: Photosystem II reaction center protein J (40 aa).

Residues 8–28 (IPLWLIGTVTGTLVIGLIGIF) traverse the membrane as a helical segment.

This sequence belongs to the PsbJ family. As to quaternary structure, PSII is composed of 1 copy each of membrane proteins PsbA, PsbB, PsbC, PsbD, PsbE, PsbF, PsbH, PsbI, PsbJ, PsbK, PsbL, PsbM, PsbT, PsbX, PsbY, PsbZ, Psb30/Ycf12, at least 3 peripheral proteins of the oxygen-evolving complex and a large number of cofactors. It forms dimeric complexes.

It localises to the plastid. The protein resides in the chloroplast thylakoid membrane. In terms of biological role, one of the components of the core complex of photosystem II (PSII). PSII is a light-driven water:plastoquinone oxidoreductase that uses light energy to abstract electrons from H(2)O, generating O(2) and a proton gradient subsequently used for ATP formation. It consists of a core antenna complex that captures photons, and an electron transfer chain that converts photonic excitation into a charge separation. This chain is Photosystem II reaction center protein J, found in Cycas taitungensis (Prince sago).